Reading from the N-terminus, the 680-residue chain is Translation factor GUF1 homolog, chloroplastic (680 aa).

A chloroplast-targeting transit peptide spans 1–51; it reads MAAKINSLAALVSLQASHHHHXSTPFYFSPFSPHLSTTLTSRRRSLRSAVV. Positions 83–264 constitute a tr-type G domain; it reads SNIRNFCIIA…AIVKRIPPPC (182 aa). GTP is bound by residues 92-99, 157-161, and 211-214; these read AHIDHGKS, DTPGH, and NKID.

The protein belongs to the TRAFAC class translation factor GTPase superfamily. Classic translation factor GTPase family. LepA subfamily.

The protein resides in the plastid. It localises to the chloroplast. The catalysed reaction is GTP + H2O = GDP + phosphate + H(+). Its function is as follows. Promotes chloroplast protein synthesis. May act as a fidelity factor of the translation reaction, by catalyzing a one-codon backward translocation of tRNAs on improperly translocated ribosomes. The chain is Translation factor GUF1 homolog, chloroplastic from Vitis vinifera (Grape).